The primary structure comprises 258 residues: NAD kinase (258 aa).

Asp51 acts as the Proton acceptor in catalysis. NAD(+) contacts are provided by residues 51–52 (DG), Arg56, 119–120 (ND), Lys130, Asp149, 160–165 (TAYSLS), and Ala184.

Belongs to the NAD kinase family. It depends on a divalent metal cation as a cofactor.

Its subcellular location is the cytoplasm. The enzyme catalyses NAD(+) + ATP = ADP + NADP(+) + H(+). Involved in the regulation of the intracellular balance of NAD and NADP, and is a key enzyme in the biosynthesis of NADP. Catalyzes specifically the phosphorylation on 2'-hydroxyl of the adenosine moiety of NAD to yield NADP. The protein is NAD kinase of Thermotoga neapolitana (strain ATCC 49049 / DSM 4359 / NBRC 107923 / NS-E).